The following is a 101-amino-acid chain: Small ribosomal subunit protein uS14 (101 aa).

Belongs to the universal ribosomal protein uS14 family. Part of the 30S ribosomal subunit. Contacts proteins S3 and S10.

Its function is as follows. Binds 16S rRNA, required for the assembly of 30S particles and may also be responsible for determining the conformation of the 16S rRNA at the A site. The chain is Small ribosomal subunit protein uS14 from Aliivibrio salmonicida (strain LFI1238) (Vibrio salmonicida (strain LFI1238)).